The sequence spans 138 residues: Large ribosomal subunit protein uL16 (138 aa).

Over residues 1 to 17 (MLIPRRVKHRKQHHPTR) the composition is skewed to basic residues. Residues 1-24 (MLIPRRVKHRKQHHPTRRGAASGG) form a disordered region.

Belongs to the universal ribosomal protein uL16 family. As to quaternary structure, part of the 50S ribosomal subunit.

Its function is as follows. Binds 23S rRNA and is also seen to make contacts with the A and possibly P site tRNAs. The sequence is that of Large ribosomal subunit protein uL16 from Kineococcus radiotolerans (strain ATCC BAA-149 / DSM 14245 / SRS30216).